The chain runs to 293 residues: Ribosomal protein L11 methyltransferase (293 aa).

T145, G166, D188, and N230 together coordinate S-adenosyl-L-methionine.

It belongs to the methyltransferase superfamily. PrmA family.

Its subcellular location is the cytoplasm. The catalysed reaction is L-lysyl-[protein] + 3 S-adenosyl-L-methionine = N(6),N(6),N(6)-trimethyl-L-lysyl-[protein] + 3 S-adenosyl-L-homocysteine + 3 H(+). In terms of biological role, methylates ribosomal protein L11. The polypeptide is Ribosomal protein L11 methyltransferase (Klebsiella pneumoniae subsp. pneumoniae (strain ATCC 700721 / MGH 78578)).